Consider the following 371-residue polypeptide: 4-hydroxy-3-methylbut-2-en-1-yl diphosphate synthase (flavodoxin) (371 aa).

Residues Cys-270, Cys-273, Cys-305, and Glu-312 each coordinate [4Fe-4S] cluster.

Belongs to the IspG family. [4Fe-4S] cluster is required as a cofactor.

It carries out the reaction (2E)-4-hydroxy-3-methylbut-2-enyl diphosphate + oxidized [flavodoxin] + H2O + 2 H(+) = 2-C-methyl-D-erythritol 2,4-cyclic diphosphate + reduced [flavodoxin]. It functions in the pathway isoprenoid biosynthesis; isopentenyl diphosphate biosynthesis via DXP pathway; isopentenyl diphosphate from 1-deoxy-D-xylulose 5-phosphate: step 5/6. In terms of biological role, converts 2C-methyl-D-erythritol 2,4-cyclodiphosphate (ME-2,4cPP) into 1-hydroxy-2-methyl-2-(E)-butenyl 4-diphosphate. This is 4-hydroxy-3-methylbut-2-en-1-yl diphosphate synthase (flavodoxin) from Shewanella halifaxensis (strain HAW-EB4).